Reading from the N-terminus, the 387-residue chain is Krueppel-like factor 17 (387 aa).

3 disordered regions span residues 28 to 54, 213 to 234, and 257 to 277; these read FLDM…IRRV, SRDP…PLES, and RREA…SPVS. The span at 30–46 shows a compositional bias: polar residues; the sequence is DMSSSPGSGGVHTSWNR. Residues 257–270 show a composition bias toward basic and acidic residues; sequence RREAQNSRAQERAS. 3 consecutive C2H2-type zinc fingers follow at residues 280–304, 310–334, and 340–362; these read YHCE…QRKH, YKCT…TRIH, and HKCD…QRTH. The interval 357 to 387 is disordered; that stretch reads QHQRTHMRMPRSPDPQADSGRRAGPLPAPHL.

Belongs to the Sp1 C2H2-type zinc-finger protein family.

The protein localises to the nucleus. Transcription repressor that binds to the promoter of target genes and prevents their expression. Acts as a negative regulator of epithelial-mesenchymal transition and metastasis in breast cancer. Specifically binds the 5'-CACCC-3' sequence in the promoter of ID1, a key metastasis regulator in breast cancer, and repress its expression. May be a germ cell-specific transcription factor that plays important roles in spermatid differentiation and oocyte development. The chain is Krueppel-like factor 17 (KLF17) from Sus scrofa (Pig).